Reading from the N-terminus, the 229-residue chain is Wtf element wtf14 (229 aa).

Basic and acidic residues predominate over residues 1–26 (MENNHHLAKDSLDELNPKRGKGEHET). The segment at 1 to 27 (MENNHHLAKDSLDELNPKRGKGEHETQ) is disordered. Helical transmembrane passes span 71-91 (IPAVLLPVFVINIALFKYLVF), 100-120 (VLFGLGNGGINIFSMWLLLAT), 151-171 (LYAILKLTFVNAFAIPLLMFF), and 188-208 (VIGVMLNVAYFIIEIENPGLF).

The protein belongs to the WTF family.

It localises to the endoplasmic reticulum membrane. May act in meiotic drive. The polypeptide is Wtf element wtf14 (Schizosaccharomyces pombe (strain 972 / ATCC 24843) (Fission yeast)).